Here is a 705-residue protein sequence, read N- to C-terminus: Zinc finger protein 770 (705 aa).

K16 participates in a covalent cross-link: Glycyl lysine isopeptide (Lys-Gly) (interchain with G-Cter in SUMO2). C2H2-type zinc fingers lie at residues 31 to 53, 59 to 81, and 85 to 107; these read YICN…YLIH, FECD…QLTH, and FSCN…QQLH. Residues K116, K124, and K149 each participate in a glycyl lysine isopeptide (Lys-Gly) (interchain with G-Cter in SUMO2) cross-link. 3 C2H2-type zinc fingers span residues 164-186, 192-214, and 220-242; these read HACT…SLIH, FKCV…QLTH, and FQCC…KQIH. K266 participates in a covalent cross-link: Glycyl lysine isopeptide (Lys-Gly) (interchain with G-Cter in SUMO2). The C2H2-type 7; degenerate zinc finger occupies 298 to 322; the sequence is FQCSECEECFESEQILNGHKCLPAR. C2H2-type zinc fingers lie at residues 485 to 507, 513 to 535, 640 to 662, and 668 to 690; these read CPCD…YLIH, FDCN…KLTH, YQCS…YLIH, and FECS…QLTH. K698 is covalently cross-linked (Glycyl lysine isopeptide (Lys-Gly) (interchain with G-Cter in SUMO2)).

This sequence belongs to the krueppel C2H2-type zinc-finger protein family.

The protein resides in the nucleus. In terms of biological role, may be involved in transcriptional regulation. This chain is Zinc finger protein 770 (Znf770), found in Mus musculus (Mouse).